The sequence spans 85 residues: Large ribosomal subunit protein bL27 (85 aa).

Positions 1-22 (MAKTKAGGSTRNGRDSKGRRLG) are disordered.

Belongs to the bacterial ribosomal protein bL27 family.

The sequence is that of Large ribosomal subunit protein bL27 from Mycoplasmopsis pulmonis (strain UAB CTIP) (Mycoplasma pulmonis).